The primary structure comprises 705 residues: Elongation factor G (705 aa).

The region spanning 7-287 (HLTRNIGIMA…YVCAFLPSPL (281 aa)) is the tr-type G domain. GTP is bound by residues 16 to 23 (AHIDAGKT), 84 to 88 (DTPGH), and 138 to 141 (NKMD). The tract at residues 291 to 312 (NVVGTNPDTGAEEDRKPSEDDK) is disordered. The segment covering 302–312 (EEDRKPSEDDK) has biased composition (basic and acidic residues).

The protein belongs to the TRAFAC class translation factor GTPase superfamily. Classic translation factor GTPase family. EF-G/EF-2 subfamily.

The protein resides in the cytoplasm. Its function is as follows. Catalyzes the GTP-dependent ribosomal translocation step during translation elongation. During this step, the ribosome changes from the pre-translocational (PRE) to the post-translocational (POST) state as the newly formed A-site-bound peptidyl-tRNA and P-site-bound deacylated tRNA move to the P and E sites, respectively. Catalyzes the coordinated movement of the two tRNA molecules, the mRNA and conformational changes in the ribosome. The protein is Elongation factor G of Bacteroides fragilis (strain ATCC 25285 / DSM 2151 / CCUG 4856 / JCM 11019 / LMG 10263 / NCTC 9343 / Onslow / VPI 2553 / EN-2).